Reading from the N-terminus, the 293-residue chain is Acetylglutamate kinase (293 aa).

Substrate-binding positions include 65-66 (GG), Arg87, and Asn180.

Belongs to the acetylglutamate kinase family. ArgB subfamily.

It localises to the cytoplasm. It carries out the reaction N-acetyl-L-glutamate + ATP = N-acetyl-L-glutamyl 5-phosphate + ADP. It participates in amino-acid biosynthesis; L-arginine biosynthesis; N(2)-acetyl-L-ornithine from L-glutamate: step 2/4. Its function is as follows. Catalyzes the ATP-dependent phosphorylation of N-acetyl-L-glutamate. The protein is Acetylglutamate kinase of Cereibacter sphaeroides (strain ATCC 17029 / ATH 2.4.9) (Rhodobacter sphaeroides).